Reading from the N-terminus, the 856-residue chain is DNA mismatch repair protein MutS (856 aa).

611-618 (GPNMGGKS) provides a ligand contact to ATP.

The protein belongs to the DNA mismatch repair MutS family.

This protein is involved in the repair of mismatches in DNA. It is possible that it carries out the mismatch recognition step. This protein has a weak ATPase activity. In Histophilus somni (strain 129Pt) (Haemophilus somnus), this protein is DNA mismatch repair protein MutS.